The following is a 252-amino-acid chain: Imidazole glycerol phosphate synthase subunit HisF (252 aa).

Residues Asp-11 and Asp-130 contribute to the active site.

It belongs to the HisA/HisF family. Heterodimer of HisH and HisF.

The protein resides in the cytoplasm. It carries out the reaction 5-[(5-phospho-1-deoxy-D-ribulos-1-ylimino)methylamino]-1-(5-phospho-beta-D-ribosyl)imidazole-4-carboxamide + L-glutamine = D-erythro-1-(imidazol-4-yl)glycerol 3-phosphate + 5-amino-1-(5-phospho-beta-D-ribosyl)imidazole-4-carboxamide + L-glutamate + H(+). The protein operates within amino-acid biosynthesis; L-histidine biosynthesis; L-histidine from 5-phospho-alpha-D-ribose 1-diphosphate: step 5/9. Functionally, IGPS catalyzes the conversion of PRFAR and glutamine to IGP, AICAR and glutamate. The HisF subunit catalyzes the cyclization activity that produces IGP and AICAR from PRFAR using the ammonia provided by the HisH subunit. In Acinetobacter baylyi (strain ATCC 33305 / BD413 / ADP1), this protein is Imidazole glycerol phosphate synthase subunit HisF.